We begin with the raw amino-acid sequence, 312 residues long: Dehydrogenase/reductase SDR family member 7C (312 aa).

Residues 1-18 form the signal peptide; sequence MGVMAMLMLPLLLLGISG. NAD(+) is bound by residues Ser47, Leu49, Tyr192, Lys196, and Ser227. The Proton acceptor role is filled by Tyr192.

It belongs to the short-chain dehydrogenases/reductases (SDR) family.

The protein localises to the sarcoplasmic reticulum membrane. It catalyses the reaction all-trans-retinol + NAD(+) = all-trans-retinal + NADH + H(+). NADH-dependent oxidoreductase which catalyzes the oxidation of all-trans-retinol to all-trans-retinal. Plays a role in the regulation of cardiac and skeletal muscle metabolic functions. Maintains Ca(2+) intracellular homeostasis by repressing Ca(2+) release from the sarcoplasmic reticulum (SR) in myotubes, possibly through local alternations in NAD/NADH or retinol/retinal. Also plays a role in Ca(2+) homeostasis by controlling Ca(2+) overload in the cytosol and the SR in myotubes. Involved in glucose uptake into skeletal muscles and muscle performance by activating PI3K and mTORC2-mediated AKT1 phosphorylation signaling pathways, possibly through the action of its downstream catalytic product all-trans-retinoic acid. The protein is Dehydrogenase/reductase SDR family member 7C of Homo sapiens (Human).